A 120-amino-acid polypeptide reads, in one-letter code: UPF0102 protein Moth_0988 (120 aa).

Belongs to the UPF0102 family.

The chain is UPF0102 protein Moth_0988 from Moorella thermoacetica (strain ATCC 39073 / JCM 9320).